Here is a 1390-residue protein sequence, read N- to C-terminus: DNA-directed RNA polymerase subunit beta (1390 aa).

The protein belongs to the RNA polymerase beta chain family. As to quaternary structure, the RNAP catalytic core consists of 2 alpha, 1 beta, 1 beta' and 1 omega subunit. When a sigma factor is associated with the core the holoenzyme is formed, which can initiate transcription.

The catalysed reaction is RNA(n) + a ribonucleoside 5'-triphosphate = RNA(n+1) + diphosphate. Functionally, DNA-dependent RNA polymerase catalyzes the transcription of DNA into RNA using the four ribonucleoside triphosphates as substrates. The sequence is that of DNA-directed RNA polymerase subunit beta from Gluconobacter oxydans (strain 621H) (Gluconobacter suboxydans).